A 91-amino-acid chain; its full sequence is MAQIYYVYRVTPSREDVDYEKLKQVIKGKLEPKYPVKGIEEEEIGFGIKALKIHIVTPESDEYTSDEIENILSQIEDIGGIELEYFTRVSF.

The protein belongs to the EF-1-beta/EF-1-delta family.

In terms of biological role, promotes the exchange of GDP for GTP in EF-1-alpha/GDP, thus allowing the regeneration of EF-1-alpha/GTP that could then be used to form the ternary complex EF-1-alpha/GTP/AAtRNA. The sequence is that of Elongation factor 1-beta from Caldivirga maquilingensis (strain ATCC 700844 / DSM 13496 / JCM 10307 / IC-167).